A 189-amino-acid polypeptide reads, in one-letter code: Small ribosomal subunit protein uS5 (189 aa).

An S5 DRBM domain is found at 22 to 85 (FVDKLVAINR…EAAKRDLIFV (64 aa)).

Belongs to the universal ribosomal protein uS5 family. Part of the 30S ribosomal subunit. Contacts proteins S4 and S8.

In terms of biological role, with S4 and S12 plays an important role in translational accuracy. Located at the back of the 30S subunit body where it stabilizes the conformation of the head with respect to the body. The chain is Small ribosomal subunit protein uS5 from Sinorhizobium fredii (strain NBRC 101917 / NGR234).